The following is a 337-amino-acid chain: DNA-directed RNA polymerase subunit alpha (337 aa).

An alpha N-terminal domain (alpha-NTD) region spans residues 1 to 233; that stretch reads MVREKVTVST…DLFIPFLHME (233 aa). The interval 265–337 is alpha C-terminal domain (alpha-CTD); it reads KKIALKSIFI…FVIDLAKNKF (73 aa).

The protein belongs to the RNA polymerase alpha chain family. In plastids the minimal PEP RNA polymerase catalytic core is composed of four subunits: alpha, beta, beta', and beta''. When a (nuclear-encoded) sigma factor is associated with the core the holoenzyme is formed, which can initiate transcription.

It localises to the plastid. Its subcellular location is the chloroplast. It carries out the reaction RNA(n) + a ribonucleoside 5'-triphosphate = RNA(n+1) + diphosphate. DNA-dependent RNA polymerase catalyzes the transcription of DNA into RNA using the four ribonucleoside triphosphates as substrates. The chain is DNA-directed RNA polymerase subunit alpha from Nicotiana sylvestris (Wood tobacco).